The following is a 317-amino-acid chain: Melanocyte-stimulating hormone receptor (317 aa).

Residues 1 to 37 are Extracellular-facing; it reads MPVQGSQRRLLGSLNSTPTATPKLGLAANQTGAWCLE. N29 carries N-linked (GlcNAc...) asparagine glycosylation. The chain crosses the membrane as a helical span at residues 38-63; it reads VSIPDGLFLSLGLVSLVENVLVVAAI. Over 64–72 the chain is Cytoplasmic; the sequence is AKNRNLHSP. A helical membrane pass occupies residues 73-93; it reads MYCFICCLALSDLLVSGSNML. Topologically, residues 94-118 are extracellular; sequence ETAVILLLEAGALAARAAVVQQLDN. Residues 119 to 140 traverse the membrane as a helical segment; that stretch reads VIDVITCSSMLSSLCFLGAIAV. The Cytoplasmic portion of the chain corresponds to 141–163; sequence DRYISIFYALRYHSIVTLPRAQR. A helical membrane pass occupies residues 164–183; the sequence is VVAAIWVASVLFSTLFIAYY. The Extracellular portion of the chain corresponds to 184–191; the sequence is DHAAVLLC. A helical membrane pass occupies residues 192–211; that stretch reads LVVFFLAMLVLMAVLYVHML. Topologically, residues 212–240 are cytoplasmic; the sequence is ARACQHAQGIAQLHKRQRPAHQGFGLKGA. Residues 241 to 266 form a helical membrane-spanning segment; it reads ATLTILLGIFFLCWGPFFLHLTLIVL. Residues 267–279 are Extracellular-facing; that stretch reads CPQHPTCSCIFKN. A helical membrane pass occupies residues 280–300; it reads FNLFLALIICNAIIDPLIYAF. The Cytoplasmic portion of the chain corresponds to 301–317; it reads RSQELRRTLKEVLLCSW. C315 carries the S-palmitoyl cysteine lipid modification.

Belongs to the G-protein coupled receptor 1 family. Interacts with MGRN1, but does not undergo MGRN1-mediated ubiquitination; this interaction competes with GNAS-binding and thus inhibits agonist-induced cAMP production. Interacts with OPN3; the interaction results in a decrease in MC1R-mediated cAMP signaling and ultimately a decrease in melanin production in melanocytes.

It localises to the cell membrane. In terms of biological role, receptor for MSH (alpha, beta and gamma) and ACTH. The activity of this receptor is mediated by G proteins which activate adenylate cyclase. Mediates melanogenesis, the production of eumelanin (black/brown) and phaeomelanin (red/yellow), via regulation of cAMP signaling in melanocytes. This is Melanocyte-stimulating hormone receptor (MC1R) from Colobus guereza (Mantled guereza).